A 257-amino-acid polypeptide reads, in one-letter code: Snake venom serine protease KN3 (257 aa).

Residues 1 to 18 (MVLIRVLANLLILQLSYA) form the signal peptide. Residues 19–24 (QKSSKL) constitute a propeptide that is removed on maturation. Residues 25–248 (VVGGDECNIN…HLDWIKSIIA (224 aa)) enclose the Peptidase S1 domain. Cystine bridges form between C31–C162, C49–C65, C97–C255, C141–C209, C173–C188, and C199–C224. Active-site charge relay system residues include H64 and D109. N120, N121, and N164 each carry an N-linked (GlcNAc...) asparagine glycan. The active-site Charge relay system is S203.

It belongs to the peptidase S1 family. Snake venom subfamily. In terms of assembly, monomer. In terms of tissue distribution, expressed by the venom gland.

It localises to the secreted. Snake venom serine protease that may act in the hemostasis system of the prey. This Trimeresurus stejnegeri (Chinese green tree viper) protein is Snake venom serine protease KN3.